The sequence spans 185 residues: Putative sulfur carrier protein YrkF (185 aa).

Cys-15 (cysteine persulfide intermediate) is an active-site residue. The Rhodanese domain maps to 101-185 (SDESLNILDV…GMRDWTGKTE (85 aa)).

The protein belongs to the sulfur carrier protein TusA family.

The sequence is that of Putative sulfur carrier protein YrkF (yrkF) from Bacillus subtilis (strain 168).